We begin with the raw amino-acid sequence, 366 residues long: DNA replication and repair protein RecF (366 aa).

30 to 37 (GRNAQGKT) provides a ligand contact to ATP.

This sequence belongs to the RecF family.

The protein resides in the cytoplasm. The RecF protein is involved in DNA metabolism; it is required for DNA replication and normal SOS inducibility. RecF binds preferentially to single-stranded, linear DNA. It also seems to bind ATP. The chain is DNA replication and repair protein RecF from Streptococcus thermophilus (strain CNRZ 1066).